Here is a 271-residue protein sequence, read N- to C-terminus: Putative phosphoenolpyruvate synthase regulatory protein (271 aa).

Residue glycine 152–threonine 159 participates in ADP binding.

Belongs to the pyruvate, phosphate/water dikinase regulatory protein family. PSRP subfamily.

It catalyses the reaction [pyruvate, water dikinase] + ADP = [pyruvate, water dikinase]-phosphate + AMP + H(+). The enzyme catalyses [pyruvate, water dikinase]-phosphate + phosphate + H(+) = [pyruvate, water dikinase] + diphosphate. In terms of biological role, bifunctional serine/threonine kinase and phosphorylase involved in the regulation of the phosphoenolpyruvate synthase (PEPS) by catalyzing its phosphorylation/dephosphorylation. The polypeptide is Putative phosphoenolpyruvate synthase regulatory protein (Legionella pneumophila (strain Lens)).